The sequence spans 790 residues: Tumor necrosis factor alpha-induced protein 3 (790 aa).

Ala-2 is subject to N-acetylalanine. The TRAF-binding stretch occupies residues 58-300 (PQFREIIHKA…LTDPENEMKE (243 aa)). An OTU domain is found at 92–263 (LVALKTNGDG…SHHFVPLVTL (172 aa)). Residue Asp-100 is part of the active site. Cys-103 acts as the Nucleophile in catalysis. 3 interaction with ubiquitin regions span residues 157–159 (LCY), 190–192 (SLE), and 224–227 (FAPL). His-256 acts as the Proton acceptor in catalysis. A compositionally biased stretch (basic and acidic residues) spans 357–368 (QENSEQGRREGH). Residues 357-377 (QENSEQGRREGHAQNPMEPSV) are disordered. The segment at 369–775 (AQNPMEPSVP…ACDHFGNAKC (407 aa)) is interaction with TNIP1. Residues 381-416 (SLMDVKCETPNCPFFMSVNTQPLCHECSERRQKNQN) form an A20-type 1 zinc finger. Residues 386–453 (KCETPNCPFF…EPLAWNPEES (68 aa)) form an interaction with RIPK1 region. Residues Cys-387, Cys-392, Cys-404, and Cys-407 each contribute to the Zn(2+) site. Disordered stretches follow at residues 415 to 434 (QNKLPKLNSKPGPEGLPGMA) and 447 to 468 (AWNPEESTGGPHSAPPTAPSPF). Ser-459 is subject to Phosphoserine. 2 consecutive A20-type zinc fingers follow at residues 472-507 (ETTAMKCRSPGCPFTLNVQHNGFCERCHNARQLHAS) and 515-548 (HLDPGKCQACLQDVTRTFNGICSTCFKRTTAEAS). The Zn(2+) site is built by Cys-478, Cys-483, Cys-495, Cys-498, Cys-521, Cys-524, Cys-536, and Cys-539. Positions 550-583 (SLSTSLPPSCHQRSKSDPSRLVRSPSPHSCHRAG) are disordered. Ser-575 is modified (phosphoserine). An A20-type 4 zinc finger spans residues 601–636 (RTGTSKCRKAGCVYFGTPENKGFCTLCFIEYRENKH). Positions 605–655 (SKCRKAGCVYFGTPENKGFCTLCFIEYRENKHFAAASGKVSPTASRFQNTI) are required for proteasomal degradation of UBE2N and UBE2D3, TRAF6 deubiquitination, and TAX1BP1 interaction with UBE2N. The sufficient for inhibitory activity of TNF-induced NF-kappa-B activity stretch occupies residues 606–790 (KCRKAGCVYF…ECFQFKQMYG (185 aa)). Zn(2+) is bound by residues Cys-607, Cys-612, Cys-624, and Cys-627. A Phosphoserine modification is found at Ser-645. The A20-type 5 zinc finger occupies 651 to 686 (FQNTIPCLGRECGTLGSTMFEGYCQKCFIEAQNQRF). Zn(2+)-binding residues include Cys-657, Cys-662, Cys-674, and Cys-677. The segment covering 689-705 (AKRTEEQLRSSQRRDVP) has biased composition (basic and acidic residues). A disordered region spans residues 689–712 (AKRTEEQLRSSQRRDVPRTTQSTS). A required for lysosomal localization and for TRAF2 lysosomal degradation region spans residues 697–790 (RSSQRRDVPR…ECFQFKQMYG (94 aa)). A20-type zinc fingers lie at residues 710–745 (STSRPKCARASCKNILACRSEELCMECQHPNQRMGP) and 756–790 (DPPKQRCRAPACDHFGNAKCNGYCNECFQFKQMYG). Residues Cys-716, Cys-721, Cys-733, Cys-736, Cys-762, Cys-767, Cys-779, and Cys-782 each contribute to the Zn(2+) site.

This sequence belongs to the peptidase C64 family. In terms of assembly, homodimer. Interacts with TNIP1, TAX1BP1 and TRAF2. Interacts with RNF11, ITCH and TAX1BP1 only after TNF stimulation; these interaction are transient and they are lost after 1 hour of stimulation with TNF. Interacts with YWHAZ and YWHAH. Interacts with IKBKG; the interaction is induced by TNF stimulation and by polyubiquitin. Interacts with RIPK1. Interacts with UBE2N; the interaction requires TAX1BP1. Interacts with TRAF6; the interaction is inhibited by HTLV-1 protein Tax. Proteolytically cleaved by MALT1 upon TCR stimulation; disrupts NF-kappa-B inhibitory function and results in increased IL-2 production. It is proposed that only a fraction of TNFAIP3 colocalized with TCR and CBM complex is cleaved, leaving the main TNFAIP3 pool intact.

Its subcellular location is the cytoplasm. The protein localises to the nucleus. The protein resides in the lysosome. It catalyses the reaction Thiol-dependent hydrolysis of ester, thioester, amide, peptide and isopeptide bonds formed by the C-terminal Gly of ubiquitin (a 76-residue protein attached to proteins as an intracellular targeting signal).. In terms of biological role, ubiquitin-editing enzyme that contains both ubiquitin ligase and deubiquitinase activities. Involved in immune and inflammatory responses signaled by cytokines, such as TNF-alpha and IL-1 beta, or pathogens via Toll-like receptors (TLRs) through terminating NF-kappa-B activity. Essential component of a ubiquitin-editing protein complex, comprising also RNF11, ITCH and TAX1BP1, that ensures the transient nature of inflammatory signaling pathways. In cooperation with TAX1BP1 promotes disassembly of E2-E3 ubiquitin protein ligase complexes in IL-1R and TNFR-1 pathways; affected are at least E3 ligases TRAF6, TRAF2 and BIRC2, and E2 ubiquitin-conjugating enzymes UBE2N and UBE2D3. In cooperation with TAX1BP1 promotes ubiquitination of UBE2N and proteasomal degradation of UBE2N and UBE2D3. Upon TNF stimulation, deubiquitinates 'Lys-63'-polyubiquitin chains on RIPK1 and catalyzes the formation of 'Lys-48'-polyubiquitin chains. This leads to RIPK1 proteasomal degradation and consequently termination of the TNF- or LPS-mediated activation of NF-kappa-B. Deubiquitinates TRAF6 probably acting on 'Lys-63'-linked polyubiquitin. Upon T-cell receptor (TCR)-mediated T-cell activation, deubiquitinates 'Lys-63'-polyubiquitin chains on MALT1 thereby mediating disassociation of the CBM (CARD11:BCL10:MALT1) and IKK complexes and preventing sustained IKK activation. Deubiquitinates NEMO/IKBKG; the function is facilitated by TNIP1 and leads to inhibition of NF-kappa-B activation. Upon stimulation by bacterial peptidoglycans, probably deubiquitinates RIPK2. Can also inhibit I-kappa-B-kinase (IKK) through a non-catalytic mechanism which involves polyubiquitin; polyubiquitin promotes association with IKBKG and prevents IKK MAP3K7-mediated phosphorylation. Targets TRAF2 for lysosomal degradation. In vitro able to deubiquitinate 'Lys-11'-, 'Lys-48'- and 'Lys-63' polyubiquitin chains. Inhibitor of programmed cell death. Has a role in the function of the lymphoid system. Required for LPS-induced production of pro-inflammatory cytokines and IFN beta in LPS-tolerized macrophages. In Homo sapiens (Human), this protein is Tumor necrosis factor alpha-induced protein 3 (TNFAIP3).